A 210-amino-acid polypeptide reads, in one-letter code: Small ribosomal subunit protein uS4 (210 aa).

The disordered stretch occupies residues 30–49; it reads EKSSLEKRKYPPGLPPKKKG. The 64-residue stretch at 99-162 folds into the S4 RNA-binding domain; the sequence is RRLDNVLYRM…QKSAFIEENI (64 aa).

Belongs to the universal ribosomal protein uS4 family. Part of the 30S ribosomal subunit. Contacts protein S5. The interaction surface between S4 and S5 is involved in control of translational fidelity.

One of the primary rRNA binding proteins, it binds directly to 16S rRNA where it nucleates assembly of the body of the 30S subunit. Functionally, with S5 and S12 plays an important role in translational accuracy. In Leptospira biflexa serovar Patoc (strain Patoc 1 / Ames), this protein is Small ribosomal subunit protein uS4.